Reading from the N-terminus, the 20-residue chain is Collagenolytic protease 28 kDa (20 aa).

A Peptidase S1 domain is found at 1–20 (IVGGQEASPGSWPXQVGLFF).

The protein belongs to the peptidase S1 family.

The enzyme catalyses Hydrolysis of proteins, with broad specificity for peptide bonds. Native collagen is cleaved about 75% of the length of the molecule from the N-terminus. Low activity on small molecule substrates of both trypsin and chymotrypsin.. Functionally, this enzyme is a serine protease capable of degrading the native triple helix of collagen. The polypeptide is Collagenolytic protease 28 kDa (Paralithodes camtschaticus (Red king crab)).